Reading from the N-terminus, the 217-residue chain is Ribosomal RNA small subunit methyltransferase G (217 aa).

S-adenosyl-L-methionine-binding positions include G79, F84, 130–131 (AE), and R148.

Belongs to the methyltransferase superfamily. RNA methyltransferase RsmG family.

It is found in the cytoplasm. The catalysed reaction is guanosine(527) in 16S rRNA + S-adenosyl-L-methionine = N(7)-methylguanosine(527) in 16S rRNA + S-adenosyl-L-homocysteine. Functionally, specifically methylates the N7 position of guanine in position 527 of 16S rRNA. The sequence is that of Ribosomal RNA small subunit methyltransferase G from Myxococcus xanthus (strain DK1622).